A 76-amino-acid chain; its full sequence is Conotoxin Cal5a L2 (76 aa).

An N-terminal signal peptide occupies residues 1–22 (MRFYIGLMAALMLTSILRTDSA). A propeptide spanning residues 23–42 (SVGQTGTKSELALIERVIRQ) is cleaved from the precursor. Pro50 carries the 4-hydroxyproline modification. A 4-hydroxyproline; partial mark is found at Pro58, Pro62, and Pro64.

It belongs to the conotoxin T superfamily. Contains 2 disulfide bonds that can be either 'C1-C3, C2-C4' or 'C1-C4, C2-C3', since these disulfide connectivities have been observed for conotoxins with cysteine framework V (for examples, see AC P0DQQ7 and AC P81755). As to expression, expressed by the venom duct.

The protein resides in the secreted. Functionally, probable neurotoxin with unknown target. Possibly targets ion channels. The chain is Conotoxin Cal5a L2 from Californiconus californicus (California cone).